A 1363-amino-acid chain; its full sequence is Spike glycoprotein (1363 aa).

The signal sequence occupies residues 1–13 (MFLILLISLPMAF). Over 14–1307 (AVIGDLKCTT…GTYEYYVKWP (1294 aa)) the chain is Extracellular. The BetaCoV S1-NTD domain maps to 15–298 (VIGDLKCTTV…DFMSEIKCKT (284 aa)). 5 cysteine pairs are disulfide-bonded: cysteine 21–cysteine 165, cysteine 160–cysteine 193, cysteine 172–cysteine 252, cysteine 286–cysteine 296, and cysteine 331–cysteine 356. 2 N-linked (GlcNAc...) asparagine; by host glycosylation sites follow: asparagine 59 and asparagine 133. An N-linked (GlcNAc...) asparagine; by host glycan is attached at asparagine 198. One can recognise a BetaCoV S1-CTD domain in the interval 329-617 (PDCNIEAWLN…DVNSGTTCST (289 aa)). An N-linked (GlcNAc...) asparagine; by host glycan is attached at asparagine 359. Cystine bridges form between cysteine 374-cysteine 427 and cysteine 386-cysteine 615. Residues asparagine 437, asparagine 649, asparagine 676, asparagine 696, asparagine 714, asparagine 739, and asparagine 788 are each glycosylated (N-linked (GlcNAc...) asparagine; by host). Fusion peptide stretches follow at residues 914 to 935 (SAIEDLLFSKVKLSDVGFVEAY) and 933 to 953 (EAYNNCTGGAEIRDLICVQSY). Asparagine 937 carries N-linked (GlcNAc...) asparagine; by host glycosylation. The cysteines at positions 938 and 949 are disulfide-linked. Positions 1014–1064 (QKLIANAFNNALDAIQEGFDATNSALVKIQAVVNANAEALNNLLQQLSNRF) are heptad repeat 1. A coiled-coil region spans residues 1043–1087 (QAVVNANAEALNNLLQQLSNRFGAISSSLQEILSRLDALEAQAQI). N-linked (GlcNAc...) asparagine; by host glycans are attached at residues asparagine 1194, asparagine 1224, asparagine 1234, asparagine 1253, asparagine 1267, and asparagine 1288. The heptad repeat 2 stretch occupies residues 1258–1296 (APDLSLDYINVTFLDLQDEMNRLQEAIKVLNQSYINLKD). A coiled-coil region spans residues 1269–1297 (TFLDLQDEMNRLQEAIKVLNQSYINLKDI). Residues 1308–1328 (WYVWLLIGFAGVAMLVLLFFI) traverse the membrane as a helical segment. At 1329–1363 (CCCTGCGTSCFKICGGCCDDYTGHQELVIKTSHDD) the chain is on the cytoplasmic side. Positions 1359-1363 (TSHDD) match the KxHxx motif.

It belongs to the betacoronaviruses spike protein family. In terms of assembly, homotrimer; each monomer consists of a S1 and a S2 subunit. The resulting peplomers protrude from the virus surface as spikes. In terms of processing, specific enzymatic cleavages in vivo yield mature proteins. The precursor is processed into S1 and S2 by host cell furin or another cellular protease to yield the mature S1 and S2 proteins. Additionally, a second cleavage leads to the release of a fusion peptide after viral attachment to host cell receptor. Post-translationally, the cytoplasmic Cys-rich domain is palmitoylated. Spike glycoprotein is digested within host endosomes.

It localises to the virion membrane. It is found in the host endoplasmic reticulum-Golgi intermediate compartment membrane. The protein localises to the host cell membrane. Its function is as follows. Attaches the virion to the cell membrane by interacting with host receptor, initiating the infection. In terms of biological role, mediates fusion of the virion and cellular membranes by acting as a class I viral fusion protein. Under the current model, the protein has at least three conformational states: pre-fusion native state, pre-hairpin intermediate state, and post-fusion hairpin state. During viral and target cell membrane fusion, the coiled coil regions (heptad repeats) assume a trimer-of-hairpins structure, positioning the fusion peptide in close proximity to the C-terminal region of the ectodomain. The formation of this structure appears to drive apposition and subsequent fusion of viral and target cell membranes. Acts as a viral fusion peptide which is unmasked following S2 cleavage occurring upon virus endocytosis. This Bos taurus (Bovine) protein is Spike glycoprotein.